Reading from the N-terminus, the 583-residue chain is Cationic amino acid transporter 6, chloroplastic (583 aa).

The transit peptide at 1–50 (MEVQSSSNNGGHSSFSSLRVYLNSLSATPSRLSRRAISVSTSSDEMSRVR) directs the protein to the chloroplast. The next 14 membrane-spanning stretches (helical) occupy residues 63–83 (WYDLIGLGIGGMVGAGVFVTT), 91–111 (AGPSIVVSYAIAGLCALLSAF), 132–152 (ITFGEFPAFFTGANLVMDYVM), 186–206 (GFNEIDPVAVLVVLVITVIIC), 216–236 (NMIMTAFHIAFIFFVIVMGFI), 255–275 (FFPFGAAGVFNGAAMVYLSYI), 294–314 (IPVGVSGSVAIVTVLYCLMAV), 347–367 (VVGIGASFGILTSLLVAMLGQ), 397–417 (ASTFLGIFTAALALFTDLNVL), 418–438 (LNLVSIGTLFVFYMVANALIF), 450–470 (WPTLCFLTLFSITSLVFTLIW), 481–501 (FMLGASAVVAIAIVLSFQCVV), 509–529 (LWGVPFMPWTPCVSIFLNIFL), and 541–561 (FGFFSGLIVLVYLFYGVHASS).

The protein belongs to the amino acid-polyamine-organocation (APC) superfamily. Cationic amino acid transporter (CAT) (TC 2.A.3.3) family. In terms of tissue distribution, expressed in roots, stems, flowers, and leaves.

It is found in the plastid. It localises to the chloroplast membrane. In terms of biological role, permease involved in the transport of the cationic neutral or acidic amino acids. This is Cationic amino acid transporter 6, chloroplastic (CAT6) from Arabidopsis thaliana (Mouse-ear cress).